The primary structure comprises 142 residues: Large ribosomal subunit protein uL11 (142 aa).

The protein belongs to the universal ribosomal protein uL11 family. As to quaternary structure, part of the ribosomal stalk of the 50S ribosomal subunit. Interacts with L10 and the large rRNA to form the base of the stalk. L10 forms an elongated spine to which L12 dimers bind in a sequential fashion forming a multimeric L10(L12)X complex. Post-translationally, one or more lysine residues are methylated.

Forms part of the ribosomal stalk which helps the ribosome interact with GTP-bound translation factors. The protein is Large ribosomal subunit protein uL11 of Hahella chejuensis (strain KCTC 2396).